The chain runs to 701 residues: Elongation factor G 1 (701 aa).

Positions 13–288 (KYTRNIGIMA…GVIDYLPSPL (276 aa)) constitute a tr-type G domain. GTP is bound by residues 22–29 (AHIDAGKT), 86–90 (DTPGH), and 140–143 (NKMD).

Belongs to the TRAFAC class translation factor GTPase superfamily. Classic translation factor GTPase family. EF-G/EF-2 subfamily.

It localises to the cytoplasm. Functionally, catalyzes the GTP-dependent ribosomal translocation step during translation elongation. During this step, the ribosome changes from the pre-translocational (PRE) to the post-translocational (POST) state as the newly formed A-site-bound peptidyl-tRNA and P-site-bound deacylated tRNA move to the P and E sites, respectively. Catalyzes the coordinated movement of the two tRNA molecules, the mRNA and conformational changes in the ribosome. The protein is Elongation factor G 1 of Bdellovibrio bacteriovorus (strain ATCC 15356 / DSM 50701 / NCIMB 9529 / HD100).